A 397-amino-acid chain; its full sequence is Acetate kinase (397 aa).

Residue asparagine 8 participates in Mg(2+) binding. An ATP-binding site is contributed by lysine 15. Residue arginine 89 participates in substrate binding. The Proton donor/acceptor role is filled by aspartate 146. Residues 206–210 (HLGNG), 281–283 (DLR), and 329–333 (GIGEN) each bind ATP. Residue glutamate 382 participates in Mg(2+) binding.

Belongs to the acetokinase family. In terms of assembly, homodimer. It depends on Mg(2+) as a cofactor. Requires Mn(2+) as cofactor.

It is found in the cytoplasm. It carries out the reaction acetate + ATP = acetyl phosphate + ADP. It functions in the pathway metabolic intermediate biosynthesis; acetyl-CoA biosynthesis; acetyl-CoA from acetate: step 1/2. Catalyzes the formation of acetyl phosphate from acetate and ATP. Can also catalyze the reverse reaction. In Geobacillus sp. (strain WCH70), this protein is Acetate kinase.